The chain runs to 248 residues: MQFINKQSEQLFIELKAFFKQYHVFIKERQYYLEALTHNSYANEHNLSYTYQRMEFLGDAILAKEISLYLFLSFPDKNEGEITNLRSKIVREGTLAELVRRMNWAPFLLLGKGEIKTKGYEKNRILADIYESMIAALYLDLGEDVVRTFINNTLIRMVSNPGFFDKIRDYKTELQEFLQAGDARTLEYKLIKESQPLEGNRVLYTVVAEIGGIRYGEGCGYTHKEAEQLAARDALQKLATKSKYHFEK.

Positions 15–142 (LKAFFKQYHV…MIAALYLDLG (128 aa)) constitute an RNase III domain. Glu55 lines the Mg(2+) pocket. Asp59 is a catalytic residue. 2 residues coordinate Mg(2+): Asp128 and Glu131. The active site involves Glu131. In terms of domain architecture, DRBM spans 169-240 (DYKTELQEFL…ARDALQKLAT (72 aa)).

Belongs to the ribonuclease III family. Homodimer. Mg(2+) serves as cofactor.

The protein resides in the cytoplasm. The enzyme catalyses Endonucleolytic cleavage to 5'-phosphomonoester.. Digests double-stranded RNA. Involved in the processing of primary rRNA transcript to yield the immediate precursors to the large and small rRNAs (23S and 16S). Processes some mRNAs, and tRNAs when they are encoded in the rRNA operon. Processes pre-crRNA and tracrRNA of type II CRISPR loci if present in the organism. The chain is Ribonuclease 3 from Spiroplasma citri.